The following is a 330-amino-acid chain: Transcriptional regulatory protein PHO23 (330 aa).

The tract at residues 139 to 272 is disordered; that stretch reads EKIESKSNSK…NSNNSRISRP (134 aa). Polar residues predominate over residues 231–254; it reads TAVSPSTISTATAVNNGRIGTSTA. The span at 255-269 shows a compositional bias: low complexity; sequence SRGVSSVGNSNNSRI. A PHD-type zinc finger spans residues 280–329; the sequence is PLYCYCNQVAYGEMVGCDGADCELEWFHLPCIGLETLPKGKWYCDDCKKK. Zn(2+)-binding residues include C283, C285, C296, C301, H307, C310, C323, and C326.

This sequence belongs to the ING family. As to quaternary structure, interacts with H3K4me3 and to a lesser extent with H3K4me2. Component of the RPD3C(L) complex composed of at least ASH1, CTI6, DEP1, PHO23, RPD3, RXT2, RXT3, SAP30, SDS3, SIN3, UME1 and UME6.

The protein localises to the nucleus. Component of the RPD3C(L) histone deacetylase complex (HDAC) responsible for the deacetylation of lysine residues on the N-terminal part of the core histones (H2A, H2B, H3 and H4). Histone deacetylation gives a tag for epigenetic repression and plays an important role in transcriptional regulation, cell cycle progression and developmental events. The protein is Transcriptional regulatory protein PHO23 (PHO23) of Saccharomyces cerevisiae (strain ATCC 204508 / S288c) (Baker's yeast).